Consider the following 89-residue polypeptide: Small ribosomal subunit protein uS15 (89 aa).

The protein belongs to the universal ribosomal protein uS15 family. In terms of assembly, part of the 30S ribosomal subunit. Forms a bridge to the 50S subunit in the 70S ribosome, contacting the 23S rRNA.

One of the primary rRNA binding proteins, it binds directly to 16S rRNA where it helps nucleate assembly of the platform of the 30S subunit by binding and bridging several RNA helices of the 16S rRNA. Its function is as follows. Forms an intersubunit bridge (bridge B4) with the 23S rRNA of the 50S subunit in the ribosome. The polypeptide is Small ribosomal subunit protein uS15 (Haemophilus influenzae (strain 86-028NP)).